Here is a 367-residue protein sequence, read N- to C-terminus: UDP-N-acetylglucosamine--N-acetylmuramyl-(pentapeptide) pyrophosphoryl-undecaprenol N-acetylglucosamine transferase (367 aa).

UDP-N-acetyl-alpha-D-glucosamine is bound by residues 13–15 (TGG), N125, R165, S192, and Q293.

It belongs to the glycosyltransferase 28 family. MurG subfamily.

Its subcellular location is the cell inner membrane. It catalyses the reaction di-trans,octa-cis-undecaprenyl diphospho-N-acetyl-alpha-D-muramoyl-L-alanyl-D-glutamyl-meso-2,6-diaminopimeloyl-D-alanyl-D-alanine + UDP-N-acetyl-alpha-D-glucosamine = di-trans,octa-cis-undecaprenyl diphospho-[N-acetyl-alpha-D-glucosaminyl-(1-&gt;4)]-N-acetyl-alpha-D-muramoyl-L-alanyl-D-glutamyl-meso-2,6-diaminopimeloyl-D-alanyl-D-alanine + UDP + H(+). Its pathway is cell wall biogenesis; peptidoglycan biosynthesis. In terms of biological role, cell wall formation. Catalyzes the transfer of a GlcNAc subunit on undecaprenyl-pyrophosphoryl-MurNAc-pentapeptide (lipid intermediate I) to form undecaprenyl-pyrophosphoryl-MurNAc-(pentapeptide)GlcNAc (lipid intermediate II). The sequence is that of UDP-N-acetylglucosamine--N-acetylmuramyl-(pentapeptide) pyrophosphoryl-undecaprenol N-acetylglucosamine transferase from Jannaschia sp. (strain CCS1).